The chain runs to 949 residues: Pyruvate, phosphate dikinase, chloroplastic (949 aa).

The transit peptide at 1–74 (MASAFKGILI…VMAPASDPTS (74 aa)) directs the protein to the chloroplast. A Phosphothreonine; by PDRP1 modification is found at Thr-530. His-532 functions as the Tele-phosphohistidine intermediate in the catalytic mechanism. Substrate contacts are provided by Arg-638, Arg-695, Glu-824, Gly-845, Thr-846, Asn-847, and Asp-848. Position 824 (Glu-824) interacts with Mg(2+). A Mg(2+)-binding site is contributed by Asp-848. The active-site Proton donor is Cys-910.

This sequence belongs to the PEP-utilizing enzyme family. In terms of assembly, homodimer. The cofactor is Mg(2+). Post-translationally, phosphorylation of Thr-530 in the dark inactivates the enzyme. Dephosphorylation upon light stimulation reactivates the enzyme.

The protein resides in the plastid. The protein localises to the chloroplast. The enzyme catalyses pyruvate + phosphate + ATP = phosphoenolpyruvate + AMP + diphosphate + H(+). Its activity is regulated as follows. Activated by light-induced dephosphorylation. Inhibited by dark-induced phosphorylation. Both reactions are catalyzed by PDRP1. Its function is as follows. Formation of phosphoenolpyruvate, which is the primary acceptor of CO(2) in C4 and some Crassulacean acid metabolism plants. The protein is Pyruvate, phosphate dikinase, chloroplastic (PPD) of Mesembryanthemum crystallinum (Common ice plant).